A 576-amino-acid chain; its full sequence is Adenine deaminase (576 aa).

This sequence belongs to the metallo-dependent hydrolases superfamily. Adenine deaminase family. Mn(2+) serves as cofactor.

The enzyme catalyses adenine + H2O + H(+) = hypoxanthine + NH4(+). This Syntrophobacter fumaroxidans (strain DSM 10017 / MPOB) protein is Adenine deaminase.